The chain runs to 381 residues: Homoserine O-succinyltransferase (381 aa).

The region spanning 45-360 is the AB hydrolase-1 domain; that stretch reads NAVLVCHALN…PHGHDAFLLD (316 aa). Ser-151 serves as the catalytic Nucleophile. A substrate-binding site is contributed by Arg-221. Residues Asp-321 and His-354 contribute to the active site. Asp-355 contacts substrate.

The protein belongs to the AB hydrolase superfamily. MetX family. Homodimer.

The protein localises to the cytoplasm. It carries out the reaction L-homoserine + succinyl-CoA = O-succinyl-L-homoserine + CoA. The protein operates within amino-acid biosynthesis; L-methionine biosynthesis via de novo pathway; O-succinyl-L-homoserine from L-homoserine: step 1/1. Functionally, transfers a succinyl group from succinyl-CoA to L-homoserine, forming succinyl-L-homoserine. This Paraburkholderia phymatum (strain DSM 17167 / CIP 108236 / LMG 21445 / STM815) (Burkholderia phymatum) protein is Homoserine O-succinyltransferase.